The chain runs to 430 residues: Histidine--tRNA ligase (430 aa).

It belongs to the class-II aminoacyl-tRNA synthetase family. As to quaternary structure, homodimer.

Its subcellular location is the cytoplasm. It catalyses the reaction tRNA(His) + L-histidine + ATP = L-histidyl-tRNA(His) + AMP + diphosphate + H(+). This chain is Histidine--tRNA ligase, found in Chlamydia caviae (strain ATCC VR-813 / DSM 19441 / 03DC25 / GPIC) (Chlamydophila caviae).